We begin with the raw amino-acid sequence, 201 residues long: Ribonuclease HII (201 aa).

An RNase H type-2 domain is found at 12-201 (GIVCGIDEVG…FAPVAQYMLF (190 aa)). 3 residues coordinate a divalent metal cation: D18, E19, and D113.

It belongs to the RNase HII family. The cofactor is Mn(2+). Mg(2+) is required as a cofactor.

Its subcellular location is the cytoplasm. It carries out the reaction Endonucleolytic cleavage to 5'-phosphomonoester.. Functionally, endonuclease that specifically degrades the RNA of RNA-DNA hybrids. The polypeptide is Ribonuclease HII (rnhB) (Paramagnetospirillum magneticum (strain ATCC 700264 / AMB-1) (Magnetospirillum magneticum)).